The following is a 407-amino-acid chain: Steroid 3-ketoacyl-CoA thiolase FadA6 (407 aa).

Cysteine 110 functions as the Acyl-thioester intermediate in the catalytic mechanism. CoA-binding positions include glutamine 178, 237–239 (RES), and serine 262. Catalysis depends on proton acceptor residues histidine 363 and cysteine 393. Glycine 395 lines the substrate pocket.

Belongs to the thiolase-like superfamily. Thiolase family.

The enzyme catalyses an acyl-CoA + acetyl-CoA = a 3-oxoacyl-CoA + CoA. It catalyses the reaction 6-methyl-3,7-dioxodecanedioyl-CoA + CoA = 4-methyl-5-oxo-octanedioyl-CoA + acetyl-CoA. It functions in the pathway steroid metabolism; cholesterol degradation. In terms of biological role, may be involved in the final steps of cholesterol and steroid degradation. Catalyzes the formation of 4-methyl-5-oxo-octanedioyl-CoA (MOODA-CoA) and acetyl-CoA from 6-methyl-3,7-dioxodecanedioyl-CoA (MeDODA-CoA) and coenzyme A. This Mycobacterium tuberculosis (strain ATCC 25618 / H37Rv) protein is Steroid 3-ketoacyl-CoA thiolase FadA6.